Here is a 650-residue protein sequence, read N- to C-terminus: Acetyl-coenzyme A synthetase (650 aa).

CoA is bound by residues 191–194, T311, and N335; that span reads RAGR. ATP-binding positions include 387–389, 411–416, D500, and R515; these read GEP and DTWWQT. S523 contributes to the CoA binding site. ATP is bound at residue R526. 3 residues coordinate Mg(2+): V537, H539, and V542. R584 contributes to the CoA binding site. K609 bears the N6-acetyllysine mark.

The protein belongs to the ATP-dependent AMP-binding enzyme family. Requires Mg(2+) as cofactor. In terms of processing, acetylated. Deacetylation by the SIR2-homolog deacetylase activates the enzyme.

It carries out the reaction acetate + ATP + CoA = acetyl-CoA + AMP + diphosphate. In terms of biological role, catalyzes the conversion of acetate into acetyl-CoA (AcCoA), an essential intermediate at the junction of anabolic and catabolic pathways. AcsA undergoes a two-step reaction. In the first half reaction, AcsA combines acetate with ATP to form acetyl-adenylate (AcAMP) intermediate. In the second half reaction, it can then transfer the acetyl group from AcAMP to the sulfhydryl group of CoA, forming the product AcCoA. This chain is Acetyl-coenzyme A synthetase, found in Shewanella halifaxensis (strain HAW-EB4).